The primary structure comprises 164 residues: Large ribosomal subunit protein bL9 (164 aa).

It belongs to the bacterial ribosomal protein bL9 family.

Its function is as follows. Binds to the 23S rRNA. This chain is Large ribosomal subunit protein bL9, found in Borrelia duttonii (strain Ly).